Consider the following 433-residue polypeptide: Tol-Pal system protein TolB (433 aa).

The first 21 residues, 1-21 (MIKRLRGLLVLLCCVAGMAMA), serve as a signal peptide directing secretion.

Belongs to the TolB family. In terms of assembly, the Tol-Pal system is composed of five core proteins: the inner membrane proteins TolA, TolQ and TolR, the periplasmic protein TolB and the outer membrane protein Pal. They form a network linking the inner and outer membranes and the peptidoglycan layer.

Its subcellular location is the periplasm. Part of the Tol-Pal system, which plays a role in outer membrane invagination during cell division and is important for maintaining outer membrane integrity. The chain is Tol-Pal system protein TolB from Pseudomonas entomophila (strain L48).